A 938-amino-acid chain; its full sequence is Myocardin (938 aa).

Residues 12-27 (IRSKFRSVLQLRLQQR) carry the MEF2C-binding motif. One copy of the RPEL 1 repeat lies at 18–43 (SVLQLRLQQRRTQEQLANQGIIPPLK). The segment covering 48–61 (FHEQRKHLDSDKAK) has biased composition (basic and acidic residues). The disordered stretch occupies residues 48-68 (FHEQRKHLDSDKAKNSLKRKA). 2 RPEL repeats span residues 62 to 87 (NSLKRKARNRCNSADLVNMHILQAST) and 106 to 131 (DDLNEKIALRPGPLELVEKNILPVDS). Positions 153 to 205 (FEEDSSSDGLSPDQTRSEDPQNSAGSPPDAKASDTPSTGSLGTNQDLASGSEN) are HDAC5-binding. Positions 154–281 (EEDSSSDGLS…DQKAEKSPPP (128 aa)) are disordered. Composition is skewed to polar residues over residues 159–177 (SDGLSPDQTRSEDPQNSAG), 186–203 (DTPSTGSLGTNQDLASGS), and 210–220 (SASQPSHQSDA). Residues 248–265 (NRHKKPKDPKPKVKKLKY) are compositionally biased toward basic residues. Positions 371 to 405 (LDDLKVSELRQQLRIRGLPVSGTKTALMDRLRPFQ) constitute an SAP domain. Ser451, Ser455, Ser459, and Ser463 each carry phosphoserine; by GSK3-beta. The stretch at 516 to 561 (EKDKMLVEKQKVINELTWKLQQEQRQVEELRMQLQKQKRNNCSEKK) forms a coiled coil. A phosphoserine; by GSK3-beta mark is found at Ser626, Ser630, Ser634, and Ser638. 2 disordered regions span residues 635 to 678 (PQHS…SSPI) and 693 to 734 (SDKV…MTRS). Over residues 699-715 (KFSIPSPTFSKSSSAIS) the composition is skewed to low complexity. Residues 717–938 (VTQPPSYEDA…SSMDLHLQQW (222 aa)) are required for interaction with and ubiquitination by STUB1. 3 positions are modified to phosphoserine; by MAPK1 and MAPK3: Ser815, Ser862, and Ser869. Phosphothreonine; by MAPK1 and MAPK3 is present on Thr896.

Homodimer. Interacts with SRF, its association does not depend on specific DNA sequences for ternary complex formation. Interacts with MLLT7/FOXO4. Interacts (via C-terminal) with EP300 (via the CREB-binding domain). Interacts with HDAC4 and HDAC5. Interacts with MEF2C. Interacts (via C-terminus) with STUB1/CHIP. Interacts with PURB. Ubiquitinated; by STUB1/CHIP at the C-terminus, leading to its degradation by the proteasome. Phosphorylation by GSK3B is required for STUB1/CHIP-mediated ubiquitination. In terms of processing, phosphorylation negatively regulates the intrinsic myocardin transcriptional activity. Phosphorylated; by GSK3B. As to expression, expressed in the heart, aorta and bladder. Expressed in smooth muscle cell-containing tissues: stomach, small intestine, colon, lung, placenta and uterus. Very faint expression in prostate and skeletal muscle.

Its subcellular location is the nucleus. Its function is as follows. Smooth muscle cells (SM) and cardiac muscle cells-specific transcriptional factor which uses the canonical single or multiple CArG boxes DNA sequence. Acts as a cofactor of serum response factor (SRF) with the potential to modulate SRF-target genes. Plays a crucial role in cardiogenesis, urinary bladder development, and differentiation of the smooth muscle cell lineage (myogenesis). Positively regulates the transcription of genes involved in vascular smooth muscle contraction. This is Myocardin (MYOCD) from Homo sapiens (Human).